The following is an 855-amino-acid chain: Spindle and centriole-associated protein 1 (855 aa).

Residues Gln164–Thr200 are disordered. Thr235 carries the post-translational modification Phosphothreonine. Residues Lys300–Lys311 are compositionally biased toward basic residues. Positions Lys300–Asn328 are disordered. The segment covering Leu314 to Asn328 has biased composition (polar residues). The stretch at Asn325–Val437 forms a coiled coil. Phosphoserine occurs at positions 640 and 644. Residues Gly725–Gln751 adopt a coiled-coil conformation. Residues Ser760, Ser764, and Ser819 each carry the phosphoserine modification. Positions Glu789–Asn834 are disordered. Over residues Ser794–Gly828 the composition is skewed to polar residues.

Interacts with CEP120.

It is found in the cytoplasm. The protein resides in the cytoskeleton. Its subcellular location is the microtubule organizing center. It localises to the centrosome. The protein localises to the centriole. It is found in the spindle. In terms of biological role, regulator required for centriole duplication, for proper bipolar spindle formation and chromosome congression in mitosis. This Pongo abelii (Sumatran orangutan) protein is Spindle and centriole-associated protein 1 (SPICE1).